The following is a 294-amino-acid chain: Ribosomal protein L11 methyltransferase (294 aa).

Residues threonine 145, glycine 166, aspartate 188, and asparagine 227 each contribute to the S-adenosyl-L-methionine site.

Belongs to the methyltransferase superfamily. PrmA family.

The protein localises to the cytoplasm. The catalysed reaction is L-lysyl-[protein] + 3 S-adenosyl-L-methionine = N(6),N(6),N(6)-trimethyl-L-lysyl-[protein] + 3 S-adenosyl-L-homocysteine + 3 H(+). Functionally, methylates ribosomal protein L11. The sequence is that of Ribosomal protein L11 methyltransferase from Hydrogenovibrio crunogenus (strain DSM 25203 / XCL-2) (Thiomicrospira crunogena).